The sequence spans 103 residues: Cyclotide vitri-A (103 aa).

An N-terminal signal peptide occupies residues 1–9 (AAFALPAFA). The propeptide occupies 10–69 (SFEKDVITPAALEAVLNRKAPLSNIMMENDAIVNVIANVKTVISNPVLEEALLKTNHGVN). The segment at residues 70–99 (GIPCGESCVWIPCITSAIGCSCKSKVCYRN) is a cross-link (cyclopeptide (Gly-Asn)). 3 cysteine pairs are disulfide-bonded: cysteine 73-cysteine 89, cysteine 77-cysteine 91, and cysteine 82-cysteine 96. The propeptide occupies 100–103 (SLDN).

In terms of processing, this is a cyclic peptide.

Its function is as follows. Probably participates in a plant defense mechanism. In Viola biflora (Yellow wood violet), this protein is Cyclotide vitri-A.